An 87-amino-acid polypeptide reads, in one-letter code: Small ribosomal subunit protein bS20 (87 aa).

Residues 1–26 (MANIKSAKKRAIQAEKARKHNASRRS) are disordered.

The protein belongs to the bacterial ribosomal protein bS20 family.

Its function is as follows. Binds directly to 16S ribosomal RNA. The polypeptide is Small ribosomal subunit protein bS20 (Tolumonas auensis (strain DSM 9187 / NBRC 110442 / TA 4)).